A 367-amino-acid chain; its full sequence is tRNA-specific 2-thiouridylase MnmA (367 aa).

ATP contacts are provided by residues Ala-14–Ser-21 and Leu-40. Residue Cys-108 is the Nucleophile of the active site. Cysteines 108 and 204 form a disulfide. Gly-132 lines the ATP pocket. The interval Lys-154 to Gln-156 is interaction with tRNA. Cys-204 functions as the Cysteine persulfide intermediate in the catalytic mechanism.

The protein belongs to the MnmA/TRMU family.

The protein localises to the cytoplasm. It carries out the reaction S-sulfanyl-L-cysteinyl-[protein] + uridine(34) in tRNA + AH2 + ATP = 2-thiouridine(34) in tRNA + L-cysteinyl-[protein] + A + AMP + diphosphate + H(+). In terms of biological role, catalyzes the 2-thiolation of uridine at the wobble position (U34) of tRNA, leading to the formation of s(2)U34. This chain is tRNA-specific 2-thiouridylase MnmA, found in Rickettsia bellii (strain OSU 85-389).